The sequence spans 100 residues: Protein translation factor SUI1 homolog (100 aa).

It belongs to the SUI1 family.

The protein is Protein translation factor SUI1 homolog of Sulfurisphaera tokodaii (strain DSM 16993 / JCM 10545 / NBRC 100140 / 7) (Sulfolobus tokodaii).